A 194-amino-acid chain; its full sequence is uncharacterized protein (194 aa).

This is an uncharacterized protein from Gallus gallus (Chicken).